Reading from the N-terminus, the 529-residue chain is ATP synthase F(1) complex catalytic subunit beta, mitochondrial (529 aa).

A mitochondrion-targeting transit peptide spans 1–46 (MLSLVGRVASASASGALRGLSPSAALPQAQLLLRAAPAGVHPARDY). O-linked (GlcNAc) serine glycosylation is present at serine 106. N6-acetyllysine; alternate is present on residues lysine 124, lysine 133, and lysine 161. Lysine 124, lysine 133, and lysine 161 each carry N6-succinyllysine; alternate. An N6-acetyllysine modification is found at lysine 198. Glycine 209, valine 210, glycine 211, lysine 212, threonine 213, and valine 214 together coordinate ADP. Glycine 209 is an ATP binding site. Phosphate-binding residues include glycine 209, valine 210, glycine 211, lysine 212, and threonine 213. Residues glycine 211, lysine 212, threonine 213, and valine 214 each coordinate ATP. Residue threonine 213 coordinates Mg(2+). Glutamate 238 provides a ligand contact to Mg(2+). Arginine 239 contacts ATP. An N6-acetyllysine; alternate mark is found at lysine 259 and lysine 264. Lysine 259 and lysine 264 each carry N6-succinyllysine; alternate. Threonine 312 is modified (phosphothreonine). Position 426 is an N6-acetyllysine (lysine 426). Residue serine 433 is modified to Phosphoserine. 2 positions are modified to N6-acetyllysine: lysine 480 and lysine 485. Lysine 522 is modified (N6-acetyllysine; alternate). At lysine 522 the chain carries N6-succinyllysine; alternate. A Phosphoserine modification is found at serine 529.

The protein belongs to the ATPase alpha/beta chains family. Homotrimer. Component of the ATP synthase complex composed at least of ATP5F1A/subunit alpha, ATP5F1B/subunit beta, ATP5MC1/subunit c (homooctomer), MT-ATP6/subunit a, MT-ATP8/subunit 8, ATP5ME/subunit e, ATP5MF/subunit f, ATP5MG/subunit g, ATP5MK/subunit k, ATP5MJ/subunit j, ATP5F1C/subunit gamma, ATP5F1D/subunit delta, ATP5F1E/subunit epsilon, ATP5PF/subunit F6, ATP5PB/subunit b, ATP5PD/subunit d, ATP5PO/subunit OSCP. ATP synthase complex consists of a soluble F(1) head domain (subunits alpha(3) and beta(3)) - the catalytic core - and a membrane F(0) domain - the membrane proton channel (subunits c, a, 8, e, f, g, k and j). These two domains are linked by a central stalk (subunits gamma, delta, and epsilon) rotating inside the F1 region and a stationary peripheral stalk (subunits F6, b, d, and OSCP). Interacts with PPIF. Interacts with BCL2L1 isoform BCL-X(L); the interaction mediates the association of BCL2L1 isoform BCL-X(L) with the mitochondrial membrane F(1)F(0) ATP synthase and enhances neurons metabolic efficiency. Interacts with CLN5 and PPT1. Interacts with S100A1; this interaction increases F1-ATPase activity. Interacts with MTLN. Interacts with TTC5/STRAP; the interaction results in decreased mitochondrial ATP production. Acetylation of Lys-133 is observed in liver mitochondria from fasted mice but not from fed mice.

The protein localises to the mitochondrion inner membrane. It catalyses the reaction ATP + H2O + 4 H(+)(in) = ADP + phosphate + 5 H(+)(out). Functionally, catalytic subunit beta, of the mitochondrial membrane ATP synthase complex (F(1)F(0) ATP synthase or Complex V) that produces ATP from ADP in the presence of a proton gradient across the membrane which is generated by electron transport complexes of the respiratory chain. ATP synthase complex consist of a soluble F(1) head domain - the catalytic core - and a membrane F(1) domain - the membrane proton channel. These two domains are linked by a central stalk rotating inside the F(1) region and a stationary peripheral stalk. During catalysis, ATP synthesis in the catalytic domain of F(1) is coupled via a rotary mechanism of the central stalk subunits to proton translocation. In vivo, can only synthesize ATP although its ATP hydrolase activity can be activated artificially in vitro. With the subunit alpha (ATP5F1A), forms the catalytic core in the F(1) domain. The chain is ATP synthase F(1) complex catalytic subunit beta, mitochondrial from Mus musculus (Mouse).